Here is an 81-residue protein sequence, read N- to C-terminus: Bacteriochlorophyll c-binding protein (81 aa).

His25 provides a ligand contact to a bacteriochlorophyll c.

This sequence belongs to the BChl C/E-binding protein family.

The protein resides in the chlorosome. It is found in the chlorosome envelope. Functionally, component of the photosynthetic apparatus. The light harvesting B740 complex binds bacteriochlorophyll c. The sequence is that of Bacteriochlorophyll c-binding protein (csmA) from Prosthecochloris aestuarii (strain DSM 271 / SK 413).